A 481-amino-acid polypeptide reads, in one-letter code: Glutamyl-tRNA(Gln) amidotransferase subunit A (481 aa).

Catalysis depends on charge relay system residues Lys-78 and Ser-153. Residue Ser-177 is the Acyl-ester intermediate of the active site.

The protein belongs to the amidase family. GatA subfamily. In terms of assembly, heterotrimer of A, B and C subunits.

It carries out the reaction L-glutamyl-tRNA(Gln) + L-glutamine + ATP + H2O = L-glutaminyl-tRNA(Gln) + L-glutamate + ADP + phosphate + H(+). In terms of biological role, allows the formation of correctly charged Gln-tRNA(Gln) through the transamidation of misacylated Glu-tRNA(Gln) in organisms which lack glutaminyl-tRNA synthetase. The reaction takes place in the presence of glutamine and ATP through an activated gamma-phospho-Glu-tRNA(Gln). This Borrelia garinii subsp. bavariensis (strain ATCC BAA-2496 / DSM 23469 / PBi) (Borreliella bavariensis) protein is Glutamyl-tRNA(Gln) amidotransferase subunit A.